A 573-amino-acid chain; its full sequence is MLO-like protein 2 (573 aa).

At 1 to 15 the chain is on the extracellular side; sequence MADQVKERTLEETST. A helical transmembrane segment spans residues 16–36; it reads WAVAVVCFVLLFISIVLEHSI. Residues 37–61 are Cytoplasmic-facing; sequence HKIGTWFKKKHKQALFEALEKVKAE. A helical transmembrane segment spans residues 62-82; sequence LMLLGFISLLLTIGQTPISNI. Topologically, residues 83 to 164 are extracellular; that stretch reads CISQKVASTM…VSAYGIHQLH (82 aa). The chain crosses the membrane as a helical span at residues 165 to 185; that stretch reads IFIFVLAVVHVVYCIVTYAFG. The Cytoplasmic segment spans residues 186 to 287; it reads KIKMRTWKSW…KYIQRSLEKD (102 aa). A helical membrane pass occupies residues 288–308; that stretch reads FKTVVEISPVIWFVAVLFLLT. Over 309-317 the chain is Extracellular; the sequence is NSYGLRSYL. Residues 318 to 338 form a helical membrane-spanning segment; the sequence is WLPFIPLVVILIVGTKLEVII. The Cytoplasmic segment spans residues 339–371; sequence TKLGLRIQEKGDVVRGAPVVQPGDDLFWFGKPR. Residues 372-392 traverse the membrane as a helical segment; that stretch reads FILFLIHLVLFTNAFQLAFFA. Residues 393-415 lie on the Extracellular side of the membrane; it reads WSTYEFNLNNCFHESTADVVIRL. A helical transmembrane segment spans residues 416-436; it reads VVGAVVQILCSYVTLPLYALV. The Cytoplasmic portion of the chain corresponds to 437 to 573; that stretch reads TQMGSKMKPT…KSLRDFSFKK (137 aa). A calmodulin-binding region spans residues 450–471; it reads DRVATALKKWHHTAKNETKHGR. Residues 462–573 form a disordered region; it reads TAKNETKHGR…KSLRDFSFKK (112 aa). Composition is skewed to polar residues over residues 473–490 and 498–513; these read SGSN…THGS and NFNN…SPSP. Ser-512 is modified (phosphoserine). The segment covering 522–548 has biased composition (basic and acidic residues); sequence EHQFWDPESQHQEAETSTHHSLAHESS.

The protein belongs to the MLO family.

It is found in the membrane. In terms of biological role, may be involved in modulation of pathogen defense and leaf cell death. Activity seems to be regulated by Ca(2+)-dependent calmodulin binding and seems not to require heterotrimeric G proteins. The chain is MLO-like protein 2 (MLO2) from Arabidopsis thaliana (Mouse-ear cress).